A 50-amino-acid chain; its full sequence is MPRDIITFQCTECKNRNYTSTKNKKTTTERLEMKKFCRHCRKHQGHKEIK.

This sequence belongs to the bacterial ribosomal protein bL33 family.

In Solibacter usitatus (strain Ellin6076), this protein is Large ribosomal subunit protein bL33.